We begin with the raw amino-acid sequence, 464 residues long: Arginine biosynthesis bifunctional protein ArgJ, chloroplastic (464 aa).

Substrate contacts are provided by Thr-208, Lys-234, Thr-245, Glu-332, Asn-459, and Thr-464. The active-site Nucleophile is the Thr-245.

Belongs to the ArgJ family. In terms of assembly, heterodimer of an alpha and a beta chain.

It is found in the plastid. Its subcellular location is the chloroplast. The enzyme catalyses N(2)-acetyl-L-ornithine + L-glutamate = N-acetyl-L-glutamate + L-ornithine. It catalyses the reaction L-glutamate + acetyl-CoA = N-acetyl-L-glutamate + CoA + H(+). It participates in amino-acid biosynthesis; L-arginine biosynthesis; L-ornithine and N-acetyl-L-glutamate from L-glutamate and N(2)-acetyl-L-ornithine (cyclic): step 1/1. It functions in the pathway amino-acid biosynthesis; L-arginine biosynthesis; N(2)-acetyl-L-ornithine from L-glutamate: step 1/4. In terms of biological role, catalyzes two activities which are involved in the cyclic version of arginine biosynthesis: the synthesis of acetylglutamate from glutamate and acetyl-CoA, and of ornithine by transacetylation between acetylornithine and glutamate. The sequence is that of Arginine biosynthesis bifunctional protein ArgJ, chloroplastic from Zea mays (Maize).